A 311-amino-acid polypeptide reads, in one-letter code: Mycothiol acetyltransferase (311 aa).

Residue glutamate 35 participates in 1D-myo-inositol 2-(L-cysteinylamino)-2-deoxy-alpha-D-glucopyranoside binding. Residue 79–81 coordinates acetyl-CoA; it reads LVV. Residues 155 to 311 form the N-acetyltransferase domain; the sequence is VRTYVGTVDD…TAYALARIDD (157 aa). 1D-myo-inositol 2-(L-cysteinylamino)-2-deoxy-alpha-D-glucopyranoside contacts are provided by glutamate 180, lysine 225, and glutamate 235. Acetyl-CoA contacts are provided by residues 239–241 and 246–252; these read LGV and QGRGLGQ. Tyrosine 278 serves as a coordination point for 1D-myo-inositol 2-(L-cysteinylamino)-2-deoxy-alpha-D-glucopyranoside. 283–288 lines the acetyl-CoA pocket; that stretch reads NVAAAR.

Belongs to the acetyltransferase family. MshD subfamily. As to quaternary structure, monomer.

The enzyme catalyses 1D-myo-inositol 2-(L-cysteinylamino)-2-deoxy-alpha-D-glucopyranoside + acetyl-CoA = mycothiol + CoA + H(+). In terms of biological role, catalyzes the transfer of acetyl from acetyl-CoA to desacetylmycothiol (Cys-GlcN-Ins) to form mycothiol. The chain is Mycothiol acetyltransferase from Mycobacterium leprae (strain Br4923).